The primary structure comprises 198 residues: Synaptobrevin homolog YKT6 (198 aa).

The 119-residue stretch at 8–126 (VLYKGEAKVV…TIHYPALDGH (119 aa)) folds into the Longin domain. The v-SNARE coiled-coil homology domain maps to 138–198 (PMTKVQAELD…RKQNSCCAIM (61 aa)). Ser159 carries the phosphoserine modification. A lipid anchor (S-palmitoyl cysteine) is attached at Cys194. Residue Cys195 is modified to Cysteine methyl ester. Cys195 is lipidated: S-farnesyl cysteine. A propeptide spans 196 to 198 (AIM) (removed in mature form).

The protein belongs to the synaptobrevin family. As to quaternary structure, identified in 2 different SNARE complexes; the first one composed of GOSR1, GOSR2 and STX5 and the second one composed of BET1L, GOSR1 and STX5. Palmitoylated; catalyzes its own palmitoylation. Palmitoylation is required for Golgi targeting. In terms of processing, farnesylation is required for Golgi targeting.

Its subcellular location is the cytoplasm. The protein resides in the cytosol. It is found in the cytoplasmic vesicle membrane. It localises to the golgi apparatus membrane. Vesicular soluble NSF attachment protein receptor (v-SNARE) mediating vesicle docking and fusion to a specific acceptor cellular compartment. Functions in endoplasmic reticulum to Golgi transport; as part of a SNARE complex composed of GOSR1, GOSR2 and STX5. Functions in early/recycling endosome to TGN transport; as part of a SNARE complex composed of BET1L, GOSR1 and STX5. Has a S-palmitoyl transferase activity. The chain is Synaptobrevin homolog YKT6 (YKT6) from Homo sapiens (Human).